A 473-amino-acid polypeptide reads, in one-letter code: Trehalose-6-phosphate synthase (473 aa).

Position 10 (Arg-10) interacts with D-glucose 6-phosphate. Gly-21–Gly-22 provides a ligand contact to UDP-alpha-D-glucose. Tyr-76 and Asp-130 together coordinate D-glucose 6-phosphate. Positions 262 and 267 each coordinate UDP-alpha-D-glucose. D-glucose 6-phosphate is bound at residue Arg-300. UDP-alpha-D-glucose-binding positions include Phe-339 and Leu-365 to Glu-369. The segment at Thr-454–Ala-473 is disordered.

It belongs to the glycosyltransferase 20 family. As to quaternary structure, homotetramer.

The enzyme catalyses D-glucose 6-phosphate + UDP-alpha-D-glucose = alpha,alpha-trehalose 6-phosphate + UDP + H(+). The protein operates within glycan biosynthesis; trehalose biosynthesis. In terms of biological role, probably involved in the osmoprotection via the biosynthesis of trehalose. Catalyzes the transfer of glucose from UDP-alpha-D-glucose (UDP-Glc) to D-glucose 6-phosphate (Glc-6-P) to form trehalose-6-phosphate. Acts with retention of the anomeric configuration of the UDP-sugar donor. This chain is Trehalose-6-phosphate synthase, found in Salmonella paratyphi A (strain ATCC 9150 / SARB42).